The chain runs to 218 residues: Ribose-5-phosphate isomerase A (218 aa).

Substrate-binding positions include 27–30, 80–83, and 93–96; these read TGST, DGAD, and KGGG. Glu102 acts as the Proton acceptor in catalysis. Lys120 contributes to the substrate binding site.

Belongs to the ribose 5-phosphate isomerase family. In terms of assembly, homodimer.

It catalyses the reaction aldehydo-D-ribose 5-phosphate = D-ribulose 5-phosphate. It participates in carbohydrate degradation; pentose phosphate pathway; D-ribose 5-phosphate from D-ribulose 5-phosphate (non-oxidative stage): step 1/1. Catalyzes the reversible conversion of ribose-5-phosphate to ribulose 5-phosphate. This chain is Ribose-5-phosphate isomerase A, found in Thiobacillus denitrificans (strain ATCC 25259 / T1).